The primary structure comprises 689 residues: MGCFESKPSEQHQPTAVRGCTDIFWLVVYILFWIALLVIAVFSFVYGNPLRVINGYDSFGNTCGVSSNEKFSHFPLSGMNTKDKPYVFFLDIKELRQTLKICVKECPKKEIGNAMELYRYYEERDTKYCRYDFNMSLLTAPDASGPKYFAFAGPCPKFPVYESSSVLHRCIPSGKNAPTKVVKDMYALVNSFGAAQQVFSDIYKTWPTVLLLVGLSLIFSIILIMMLHWLTAIISWLICIFVAVASIGITAVLWWSYYKQKHSIDTDTKLSYLEELVRNETTIYVLAILATCIMIILLVVIYYLREKLSGLAALFEEAGKCMLQIPGLAGPPVLAFIALAVFLSFWMVVIVCLATANYPNVKPLLPFTQLKENPNKTEAAIKPDMSVNNNTYKSFDLVEYPEADFLRHMLWIYIIGLVWTSEFIFACQQLVISGAVAYWYFRKPTDTPVLNAIAKLVKYHLGSVAKGSFIITLFKIPRLILTYLYAKLKRHQQEGSECASCCLKCCICSFWLLEKFIRYLNHNAYTVIAIESVNFCPAAKIAWNALVTNALQVATINGIGDLVLFLGKLAVAALCGLISILMLRDNPDVHFYMAPVIIITLFSFFVAHIVLSLYEMVVDTLFLCVCEDRTINGNSGRWKQSNLAHLLGESPEQDAVEAPMQVVELTPITKQPFSVQSLQMTEIDDKGAV.

A helical membrane pass occupies residues 23-43; that stretch reads IFWLVVYILFWIALLVIAVFS. N-linked (GlcNAc...) asparagine glycosylation occurs at N134. 2 consecutive transmembrane segments (helical) span residues 199–219 and 233–255; these read FSDI…SLIF and IISW…VLWW. The N-linked (GlcNAc...) asparagine glycan is linked to N279. The next 2 helical transmembrane spans lie at 283–303 and 333–353; these read IYVL…VIYY and VLAF…IVCL. N375 and N389 each carry an N-linked (GlcNAc...) asparagine glycan. Helical transmembrane passes span 412–432, 461–481, 562–582, and 591–611; these read IYII…QLVI, LGSV…RLIL, LVLF…SILM, and FYMA…HIVL.

Belongs to the CTL (choline transporter-like) family.

The protein localises to the membrane. This is Choline transporter-like 1 from Aedes aegypti (Yellowfever mosquito).